A 451-amino-acid chain; its full sequence is UDP-N-acetylmuramoylalanine--D-glutamate ligase (451 aa).

118–124 (GTKGKST) is a binding site for ATP.

The protein belongs to the MurCDEF family.

It localises to the cytoplasm. It catalyses the reaction UDP-N-acetyl-alpha-D-muramoyl-L-alanine + D-glutamate + ATP = UDP-N-acetyl-alpha-D-muramoyl-L-alanyl-D-glutamate + ADP + phosphate + H(+). Its pathway is cell wall biogenesis; peptidoglycan biosynthesis. Its function is as follows. Cell wall formation. Catalyzes the addition of glutamate to the nucleotide precursor UDP-N-acetylmuramoyl-L-alanine (UMA). This is UDP-N-acetylmuramoylalanine--D-glutamate ligase from Borreliella afzelii (strain PKo) (Borrelia afzelii).